The following is a 523-amino-acid chain: GMP synthase [glutamine-hydrolyzing] (523 aa).

Residues 8–205 (KILILDFGSQ…VVNICGCETK (198 aa)) form the Glutamine amidotransferase type-1 domain. Catalysis depends on C85, which acts as the Nucleophile. Residues H179 and E181 contribute to the active site. The GMPS ATP-PPase domain maps to 206 to 398 (WTAENIIEDA…LGLPAEMLNR (193 aa)). 233-239 (SGGVDSS) contacts ATP.

In terms of assembly, homodimer.

It carries out the reaction XMP + L-glutamine + ATP + H2O = GMP + L-glutamate + AMP + diphosphate + 2 H(+). Its pathway is purine metabolism; GMP biosynthesis; GMP from XMP (L-Gln route): step 1/1. Functionally, catalyzes the synthesis of GMP from XMP. The polypeptide is GMP synthase [glutamine-hydrolyzing] (Glaesserella parasuis serovar 5 (strain SH0165) (Haemophilus parasuis)).